The chain runs to 357 residues: Ubiquitin carboxyl-terminal hydrolase 2 (357 aa).

A USP domain is found at 19–351; it reads TGLRNLGNTC…DAYLLFYELA (333 aa). Catalysis depends on Cys-28, which acts as the Nucleophile. Cys-177, Cys-180, Cys-228, and Cys-231 together coordinate Zn(2+). Residue His-309 is the Proton acceptor of the active site.

The protein belongs to the peptidase C19 family. USP2 subfamily. As to quaternary structure, homooligomer.

The protein resides in the cytoplasm. It is found in the perinuclear region. The enzyme catalyses Thiol-dependent hydrolysis of ester, thioester, amide, peptide and isopeptide bonds formed by the C-terminal Gly of ubiquitin (a 76-residue protein attached to proteins as an intracellular targeting signal).. Functionally, hydrolase that deubiquitinates polyubiquitinated target proteins such as MDM2, MDM4 and CCND1. Possesses both ubiquitin-specific peptidase and isopeptidase activities. May play a role in the regulation of the circadian clock. This chain is Ubiquitin carboxyl-terminal hydrolase 2 (USP2), found in Gallus gallus (Chicken).